A 140-amino-acid polypeptide reads, in one-letter code: Lipoprotein MlpD (140 aa).

Positions 1-17 (MKIINILFCLFLLMLNG) are cleaved as a signal peptide. Residue C18 is the site of N-palmitoyl cysteine attachment. C18 is lipidated: S-diacylglycerol cysteine. The tract at residues 22 to 53 (DTNNSQTKSRQKRDLTQKEATQEKPKSKEELL) is disordered. Over residues 33 to 53 (KRDLTQKEATQEKPKSKEELL) the composition is skewed to basic and acidic residues.

It belongs to the Multicopy lipoprotein (Mlp) family.

It is found in the cell outer membrane. Functionally, an outer membrane protein that may participate in pathogenesis. Some human Lyme disease patients have antibodies against this protein. The Mlp proteins probably undergo intragenic recombination, generating new alleles. This Borreliella burgdorferi (strain ATCC 35210 / DSM 4680 / CIP 102532 / B31) (Borrelia burgdorferi) protein is Lipoprotein MlpD.